The primary structure comprises 399 residues: MKSVEEQLALIKRGAEELLVESELIEKLKRGEPLRIKAGFDPTAPDLHLGHTVLINKLRQFQDLGHQVIFLIGDFTGMIGDPSGKSATRPPLTREQVLENAETYKSQVFKILDPAKTEVAFNSTWMDKMGPADFIRLTSQYTVARMLERDDFDKRYSTNQPIAIHEFLYPLVQGYDSVALRADVELGGTDQKFNLLMGRELQRGYGQEAQCILTMPLLEGLDGVKKMSKSLGNYVGIQEAPGVMYGKLVSIPDALMWRYFELLSFRSMDEINAFKADVDAGANPRDIKIKLAEEIVARFHGEEAAANAHRAAGNRMKDGELPDDLPEIELVAAEDMPIAAVLNKAGLVKNAAMARDLLGSGGVRVDGEVVDRTYIYAVGSTHVCQAGRKAFARITLKSE.

Residues 42 to 51 (PTAPDLHLGH) carry the 'HIGH' region motif. A 'KMSKS' region motif is present at residues 226-230 (KMSKS). Lysine 229 is a binding site for ATP. Positions 336–396 (MPIAAVLNKA…GRKAFARITL (61 aa)) constitute an S4 RNA-binding domain.

Belongs to the class-I aminoacyl-tRNA synthetase family. TyrS type 2 subfamily. In terms of assembly, homodimer.

The protein resides in the cytoplasm. It carries out the reaction tRNA(Tyr) + L-tyrosine + ATP = L-tyrosyl-tRNA(Tyr) + AMP + diphosphate + H(+). Its function is as follows. Catalyzes the attachment of tyrosine to tRNA(Tyr) in a two-step reaction: tyrosine is first activated by ATP to form Tyr-AMP and then transferred to the acceptor end of tRNA(Tyr). The protein is Tyrosine--tRNA ligase of Pseudomonas fluorescens (strain ATCC BAA-477 / NRRL B-23932 / Pf-5).